Consider the following 313-residue polypeptide: MEEVLEAAEKIRSMEVRGAARIARFAAETLMKFAEKASDEKFDEEMRFAAETLLNTRPTAVSLYNAINYVMRYSGESVEEKRQSVIRRAREFINWVETAQRKIGEIGEKRIKDGYTVMTHCNSSAALSVIKKAHENGKRVEVIATESRPRWQGHLTVKQLREAGIEVTLIVDSAVRYFINEVDCVVVGADTITANGALINKIGTSQIALAAKEARVPFMVAAETYKFSPKTLFGELVVIEERDAREVAPEEILKLGVKVRNPAFDVTPRDYIDVIITEIGAIPPEMAYIVITERLGYAGIEEEEITLNSRHFD.

Substrate is bound by residues 17–20 and R57; that span reads RGAA. C121 (proton acceptor) is an active-site residue. Catalysis depends on D190, which acts as the Proton donor. Residues 200 to 201 and K226 each bind substrate; that span reads NK.

This sequence belongs to the eIF-2B alpha/beta/delta subunits family. R15P isomerase subfamily.

It catalyses the reaction alpha-D-ribose 1,5-bisphosphate = D-ribulose 1,5-bisphosphate. Functionally, catalyzes the isomerization of ribose 1,5-bisphosphate (R15P) to ribulose 1,5-bisphosphate (RuBP), the CO(2) acceptor and substrate for RubisCO. Functions in an archaeal AMP degradation pathway, together with AMP phosphorylase and RubisCO. The protein is Ribose 1,5-bisphosphate isomerase of Archaeoglobus fulgidus (strain ATCC 49558 / DSM 4304 / JCM 9628 / NBRC 100126 / VC-16).